Reading from the N-terminus, the 566-residue chain is Intracellular exo-alpha-(1-&gt;5)-L-arabinofuranosidase (566 aa).

Residues 1–12 (MTTHNSQYSAET) show a composition bias toward polar residues. Positions 1–39 (MTTHNSQYSAETTHPDKQESSPAPTAAGTTASNVSTTGN) are disordered. Residues 20 to 32 (SSPAPTAAGTTAS) are compositionally biased toward low complexity. Alpha-L-arabinofuranose contacts are provided by Glu-69, Asn-114, and Asn-214. Glu-215 (proton donor/acceptor) is an active-site residue. Alpha-L-arabinofuranose-binding residues include Tyr-286, Glu-340, and Gln-409. Glu-340 serves as the catalytic Nucleophile.

It belongs to the glycosyl hydrolase 51 family. Homohexamer; trimer of dimers.

The protein localises to the cytoplasm. The catalysed reaction is Hydrolysis of terminal non-reducing alpha-L-arabinofuranoside residues in alpha-L-arabinosides.. Its pathway is glycan metabolism; L-arabinan degradation. Completely inhibited by Hg(2+) and Cu(2+) ions, whereas 1 mM Zn(2+) inhibited activity by 51%. Functionally, involved in the degradation of arabinan and is a key enzyme in the complete degradation of the plant cell wall. Catalyzes the cleavage of terminal alpha-(1-&gt;5)-arabinofuranosyl bonds in different hemicellulosic homopolysaccharides (branched and debranched arabinans). It is active with sugar beet arabinan and wheat arabinoxylan. It also exhibited activity against alpha-(1-&gt;5)-linked arabinobiose, arabinotriose, arabinotetraose, and arabinopentaose. The polypeptide is Intracellular exo-alpha-(1-&gt;5)-L-arabinofuranosidase (abfB) (Bifidobacterium longum).